We begin with the raw amino-acid sequence, 166 residues long: Xanthine-guanine phosphoribosyltransferase (166 aa).

5-phospho-alpha-D-ribose 1-diphosphate is bound by residues 42–43 (RG) and 99–107 (DDLTDTGKT). A Mg(2+)-binding site is contributed by Asp-100. 2 residues coordinate guanine: Asp-103 and Ile-146. Residues Asp-103 and Ile-146 each coordinate xanthine. GMP contacts are provided by residues 103–107 (DTGKT) and 145–146 (WI).

Belongs to the purine/pyrimidine phosphoribosyltransferase family. XGPT subfamily. As to quaternary structure, homotetramer. Requires Mg(2+) as cofactor.

Its subcellular location is the cell inner membrane. It carries out the reaction GMP + diphosphate = guanine + 5-phospho-alpha-D-ribose 1-diphosphate. The enzyme catalyses XMP + diphosphate = xanthine + 5-phospho-alpha-D-ribose 1-diphosphate. It catalyses the reaction IMP + diphosphate = hypoxanthine + 5-phospho-alpha-D-ribose 1-diphosphate. The protein operates within purine metabolism; GMP biosynthesis via salvage pathway; GMP from guanine: step 1/1. Its pathway is purine metabolism; XMP biosynthesis via salvage pathway; XMP from xanthine: step 1/1. Functionally, purine salvage pathway enzyme that catalyzes the transfer of the ribosyl-5-phosphate group from 5-phospho-alpha-D-ribose 1-diphosphate (PRPP) to the N9 position of the 6-oxopurines guanine and xanthine to form the corresponding ribonucleotides GMP (guanosine 5'-monophosphate) and XMP (xanthosine 5'-monophosphate), with the release of PPi. To a lesser extent, also acts on hypoxanthine. This is Xanthine-guanine phosphoribosyltransferase from Mesorhizobium japonicum (strain LMG 29417 / CECT 9101 / MAFF 303099) (Mesorhizobium loti (strain MAFF 303099)).